Here is a 485-residue protein sequence, read N- to C-terminus: Amidophosphoribosyltransferase, chloroplastic (485 aa).

The transit peptide at 1-18 (KTTNTFASVNDDEKPREE) directs the protein to the chloroplast. Cys19 functions as the Nucleophile in the catalytic mechanism. Residues 19–237 (CGVVGIYGDP…PGEVVVVDHT (219 aa)) form the Glutamine amidotransferase type-2 domain. Cys253 contacts [4Fe-4S] cluster. The Mg(2+) site is built by Ser300, Asp362, and Asp363. Residues Cys399, Cys450, and Cys453 each coordinate [4Fe-4S] cluster.

It in the C-terminal section; belongs to the purine/pyrimidine phosphoribosyltransferase family. Requires Mg(2+) as cofactor. [4Fe-4S] cluster serves as cofactor.

The protein localises to the plastid. The protein resides in the chloroplast. It catalyses the reaction 5-phospho-beta-D-ribosylamine + L-glutamate + diphosphate = 5-phospho-alpha-D-ribose 1-diphosphate + L-glutamine + H2O. Its pathway is purine metabolism; IMP biosynthesis via de novo pathway; N(1)-(5-phospho-D-ribosyl)glycinamide from 5-phospho-alpha-D-ribose 1-diphosphate: step 1/2. The protein is Amidophosphoribosyltransferase, chloroplastic (PUR1) of Vigna aconitifolia (Moth bean).